The following is a 306-amino-acid chain: Protein FdhE homolog (306 aa).

Belongs to the FdhE family.

It localises to the cytoplasm. In terms of biological role, necessary for formate dehydrogenase activity. In Glaesserella parasuis serovar 5 (strain SH0165) (Haemophilus parasuis), this protein is Protein FdhE homolog.